A 336-amino-acid polypeptide reads, in one-letter code: Protease HtpX homolog (336 aa).

Transmembrane regions (helical) follow at residues 7 to 24 (AMLLAAMTALFMGVGFLI) and 29 to 48 (GMMIALLIAAGTNLFSYWNA). H130 serves as a coordination point for Zn(2+). E131 is a catalytic residue. H134 provides a ligand contact to Zn(2+). The next 2 membrane-spanning stretches (helical) occupy residues 145–165 (IVATFAGAISMLGNFAFFLGG) and 171–191 (PFGFVGVLAAMIVAPFAAMIV). E200 contacts Zn(2+). Positions 278 to 287 (QQMAGGTQAA) are enriched in low complexity. Residues 278–336 (QQMAGGTQAAPRPTPRQAGEQQPSGPWGQAPQAEQPAEPERPKANPWGRNPTGPKGRWS) are disordered.

This sequence belongs to the peptidase M48B family. Requires Zn(2+) as cofactor.

The protein resides in the cell inner membrane. This chain is Protease HtpX homolog, found in Mesorhizobium japonicum (strain LMG 29417 / CECT 9101 / MAFF 303099) (Mesorhizobium loti (strain MAFF 303099)).